A 448-amino-acid polypeptide reads, in one-letter code: Phosphoglucosamine mutase (448 aa).

The Phosphoserine intermediate role is filled by S101. The Mg(2+) site is built by S101, D241, D243, and D245. Position 101 is a phosphoserine (S101).

It belongs to the phosphohexose mutase family. The cofactor is Mg(2+). Activated by phosphorylation.

It catalyses the reaction alpha-D-glucosamine 1-phosphate = D-glucosamine 6-phosphate. In terms of biological role, catalyzes the conversion of glucosamine-6-phosphate to glucosamine-1-phosphate. This chain is Phosphoglucosamine mutase, found in Macrococcus caseolyticus (strain JCSC5402) (Macrococcoides caseolyticum).